A 327-amino-acid polypeptide reads, in one-letter code: S-adenosylmethionine/S-adenosylhomocysteine transporter (327 aa).

The next 10 membrane-spanning stretches (helical) occupy residues 22-42 (CDMAIFLIFLNAFIWSSSFAL), 53-73 (LFVTGSRMVLAGVVLFGLLLC), 85-105 (IMPIVLLSVIGFYLTNVLEFI), 114-134 (TACFIYGFSPFTAAFCSYVQL), 143-163 (LGGLSLGLVSYLVYLLFGGSE), 165-185 (VAEWGWQLGLPELLLIAATCL), 202-222 (SLSMTAINAYAMVIAGVLSLI), 240-260 (LFLQAIGALVIFSNLICYNLF), 271-291 (FLSFCNLVMPLFASFFGWLLL), and 294-314 (SFPPGLLFAVGFMVLGCRLIY). The EamA 1 domain maps to 34–157 (FIWSSSFALS…LGLVSYLVYL (124 aa)). Positions 189-313 (GWTLLRKLGR…GFMVLGCRLI (125 aa)) constitute an EamA 2 domain.

This sequence belongs to the drug/metabolite transporter (DMT) superfamily. 10 TMS drug/metabolite exporter (DME) (TC 2.A.7.3) family.

Its subcellular location is the cell membrane. CCCP treatment reduces SAM intracellular uptake by 50%. Its function is as follows. Transports S-adenosylmethionine (SAM) and S-adenosylhomocysteine (SAH). Allows bacteria to acquire SAM from the eukaryotic host cell and to likely remove the toxic by-product SAH. The chain is S-adenosylmethionine/S-adenosylhomocysteine transporter from Chlamydia trachomatis serovar L2 (strain ATCC VR-902B / DSM 19102 / 434/Bu).